A 262-amino-acid polypeptide reads, in one-letter code: MKLALLDDLRTQNPIVFNISNFVTVQDVANGLNALGASPIMSEEPAEAGEMVGLAGGVCLNLGAFTQAQIQQIRTVGQQANAQHKPLVIDPVAVGAVQYRKQVATGLLADFHPDVIRGNAGEIAALADISWQAKGIDAGEGAGDLVAIAQACAQKLDCVVILSGPTDIITDGTRVVKVLNGTPLFQVHVGSGDMLSSIVAAFCAVTPDTFEAAQTACLVFAAIGQRVVQTVPDVGAGSFTVHLLDALQSTTVAQIEAVAAYE.

Met-41 contributes to the substrate binding site. Positions 117 and 163 each coordinate ATP. A substrate-binding site is contributed by Gly-190.

This sequence belongs to the Thz kinase family. Mg(2+) is required as a cofactor.

The catalysed reaction is 5-(2-hydroxyethyl)-4-methylthiazole + ATP = 4-methyl-5-(2-phosphooxyethyl)-thiazole + ADP + H(+). It participates in cofactor biosynthesis; thiamine diphosphate biosynthesis; 4-methyl-5-(2-phosphoethyl)-thiazole from 5-(2-hydroxyethyl)-4-methylthiazole: step 1/1. In terms of biological role, catalyzes the phosphorylation of the hydroxyl group of 4-methyl-5-beta-hydroxyethylthiazole (THZ). The sequence is that of Hydroxyethylthiazole kinase from Levilactobacillus brevis (strain ATCC 367 / BCRC 12310 / CIP 105137 / JCM 1170 / LMG 11437 / NCIMB 947 / NCTC 947) (Lactobacillus brevis).